The chain runs to 1987 residues: MNSRADPGDRYFRVPLENQTQQEFMGSWIPFTPKKPRSSLMVDERVINQDLNGFPGGEFVDRGFCNTGVDHNGVFDHGAHQGVTNLSMMINSLAGSHAQAWSNSERDLLGRSEVTSPLAPVIRNTTGNVEPVNGNFTSDVGMVNGPFTQSGTSQAGYNEFELDDLLNPDQMPFSFTSLLSGGDSLFKVRQYGPPACNKPLYNLNSPIRREAVGSVCESSFQYVPSTPSLFRTGEKTGFLEQIVTTTGHEIPEPKSDKSMQSIMDSSAVNATEATEQNDGSRQDVLEFDLNKTPQQKPSKRKRKFMPKVVVEGKPKRKPRKPAELPKVVVEGKPKRKPRKAATQEKVKSKETGSAKKKNLKESATKKPANVGDMSNKSPEVTLKSCRKALNFDLENPGDARQGDSESEIVQNSSGANSFSEIRDAIGGTNGSFLDSVSQIDKTNGLGAMNQPLEVSMGNQPDKLSTGAKLARDQQPDLLTRNQQCQFPVATQNTQFPMENQQAWLQMKNQLIGFPFGNQQPRMTIRNQQPCLAMGNQQPMYLIGTPRPALVSGNQQLGGPQGNKRPIFLNHQTCLPAGNQLYGSPTDMHQLVMSTGGQQHGLLIKNQQPGSLIRGQQPCVPLIDQQPATPKGFTHLNQMVATSMSSPGLRPHSQSQVPTTYLHVESVSRILNGTTGTCQRSRAPAYDSLQQDIHQGNKYILSHEISNGNGCKKALPQNSSLPTPIMAKLEEARGSKRQYHRAMGQTEKHDLNLAQQIAQSQDVERHNSSTCVEYLDAAKKTKIQKVVQENLHGMPPEVIEIEDDPTDGARKGKNTASISKGASKGNSSPVKKTAEKEKCIVPKTPAKKGRAGRKKSVPPPAHASEIQLWQPTPPKTPLSRSKPKGKGRKSIQDSGKARGPSGELLCQDSIAEIIYRMQNLYLGDKEREQEQNAMVLYKGDGALVPYESKKRKPRPKVDIDDETTRIWNLLMGKGDEKEGDEEKDKKKEKWWEEERRVFRGRADSFIARMHLVQGDRRFSPWKGSVVDSVIGVFLTQNVSDHLSSSAFMSLAARFPPKLSSSREDERNVRSVVVEDPEGCILNLNEIPSWQEKVQHPSDMEVSGVDSGSKEQLRDCSNSGIERFNFLEKSIQNLEEEVLSSQDSFDPAIFQSCGRVGSCSCSKSDAEFPTTRCETKTVSGTSQSVQTGSPNLSDEICLQGNERPHLYEGSGDVQKQETTNVAQKKPDLEKTMNWKDSVCFGQPRNDTNWQTTPSSSYEQCATRQPHVLDIEDFGMQGEGLGYSWMSISPRVDRVKNKNVPRRFFRQGGSVPREFTGQIIPSTPHELPGMGLSGSSSAVQEHQDDTQHNQQDEMNKASHLQKTFLDLLNSSEECLTRQSSTKQNITDGCLPRDRTAEDVVDPLSNNSSLQNILVESNSSNKEQTAVEYKETNATILREMKGTLADGKKPTSQWDSLRKDVEGNEGRQERNKNNMDSIDYEAIRRASISEISEAIKERGMNNMLAVRIKDFLERIVKDHGGIDLEWLRESPPDKAKDYLLSIRGLGLKSVECVRLLTLHNLAFPVDTNVGRIAVRMGWVPLQPLPESLQLHLLELYPVLESIQKFLWPRLCKLDQRTLYELHYQLITFGKVFCTKSRPNCNACPMRGECRHFASAYASARLALPAPEERSLTSATIPVPPESYPPVAIPMIELPLPLEKSLASGAPSNRENCEPIIEEPASPGQECTEITESDIEDAYYNEDPDEIPTIKLNIEQFGMTLREHMERNMELQEGDMSKALVALHPTTTSIPTPKLKNISRLRTEHQVYELPDSHRLLDGMDKREPDDPSPYLLAIWTPGETANSAQPPEQKCGGKASGKMCFDETCSECNSLREANSQTVRGTLLIPCRTAMRGSFPLNGTYFQVNELFADHESSLKPIDVPRDWIWDLPRRTVYFGTSVTSIFRGLSTEQIQFCFWKGFVCVRGFEQKTRAPRPLMARLHFPASKLKNNKT.

3 disordered regions span residues 246–378 (TGHE…NKSP), 392–415 (DLEN…SSGA), and 793–901 (MPPE…GPSG). Residues 258 to 277 (SMQSIMDSSAVNATEATEQN) show a composition bias toward polar residues. Residues 341–364 (ATQEKVKSKETGSAKKKNLKESAT) are compositionally biased toward basic and acidic residues. The segment covering 813–829 (NTASISKGASKGNSSPV) has biased composition (polar residues). Positions 844–855 (PAKKGRAGRKKS) are enriched in basic residues. The interval 955-1054 (KVDIDDETTR…AFMSLAARFP (100 aa)) is DEMETER. Disordered regions lie at residues 1324 to 1351 (LPGM…QDEM) and 1439 to 1471 (TLAD…KNNM). 2 stretches are compositionally biased toward basic and acidic residues: residues 1338 to 1351 (EHQD…QDEM) and 1452 to 1469 (SLRK…RNKN). Residues C1629, C1636, C1639, and C1645 each coordinate [4Fe-4S] cluster.

The protein belongs to the DNA glycosylase family. DEMETER subfamily. [4Fe-4S] cluster serves as cofactor. Mainly expressed in immature flower buds, then decreases as the flower matures. Expressed in the ovule carpels, but not expressed in pollen stamens. Expressed in developing and mature ovules (stages 12-14), then strongly decreases after fertilization.

The protein localises to the nucleus. In terms of biological role, transcriptional activator involved in gene imprinting. Catalyzes the release of 5-methylcytosine (5-meC) from DNA by a glycosylase/lyase mechanism. Allows the expression of the maternal copy of the imprinted MEA gene before fertilization, possibly by antagonizing or suppressing DNA methylation on target promoter. Probably acts by nicking the MEA promoter. Required for stable reproducible patterns of floral and vegetative development. The chain is Transcriptional activator DEMETER (DME) from Arabidopsis thaliana (Mouse-ear cress).